The following is a 315-amino-acid chain: Glycine--tRNA ligase alpha subunit (315 aa).

Belongs to the class-II aminoacyl-tRNA synthetase family. Tetramer of two alpha and two beta subunits.

The protein localises to the cytoplasm. It catalyses the reaction tRNA(Gly) + glycine + ATP = glycyl-tRNA(Gly) + AMP + diphosphate. The chain is Glycine--tRNA ligase alpha subunit from Pseudomonas putida (strain ATCC 47054 / DSM 6125 / CFBP 8728 / NCIMB 11950 / KT2440).